A 205-amino-acid polypeptide reads, in one-letter code: Ribosomal RNA small subunit methyltransferase G (205 aa).

S-adenosyl-L-methionine contacts are provided by residues G76, L81, 127 to 128, and R140; that span reads IE.

Belongs to the methyltransferase superfamily. RNA methyltransferase RsmG family.

Its subcellular location is the cytoplasm. The enzyme catalyses guanosine(527) in 16S rRNA + S-adenosyl-L-methionine = N(7)-methylguanosine(527) in 16S rRNA + S-adenosyl-L-homocysteine. Functionally, specifically methylates the N7 position of guanine in position 527 of 16S rRNA. This chain is Ribosomal RNA small subunit methyltransferase G, found in Francisella tularensis subsp. tularensis (strain WY96-3418).